We begin with the raw amino-acid sequence, 943 residues long: MTDYKATLNLPETAFPMKAGLPQREPETLKFWNDIGLYQKLRAIGGDRPKFVLHDGPPYANGSIHIGHAVNKILKDIIVRSKTLAGYDAPYVPGWDCHGLPIEHKVETTHGKNLPADKTRELCREYAAEQIEGQKADFIRLGVLGEWDNPYKTMNFANEANEIRALAEMVKQDFVFKGLKPVNWCFDCGSALAEAEVEYADKKSPTIDVGFPVADADKLAAAFGLAALDKPAQIVIWTTTPWTIPANQALNVHPEIDYALVDAGDRYLVLAEALVESCLARYQREGKVVATAKGEALELINFRHPFYERLSPVYLADYVALDAGTGIVHSSPAYGEDDFYTCKRYGMSNDDILSPVQSNGVYVDSLPFFGGQFIWKANPNVVAKLEEVGSLLAHETINHSYMHCWRHKTPLIYRATAQWFVGMDKQPRQGASLRERALEAITQTEFVPGWGQARLHGMIAGRPDWCISRQRNWGVPIPFFLHKASGELHPRTVELMEEVAQRVEKEGIEAWFKLDAAELLGEEAAQYDKINDTLDVWFDSGTTHWHVLRGSHRIGHASGPVADLYLEGSDQHRGWFHSSLLTGCAIDNHAPYRQLLTHGFTVDESGRKMSKSLGNTVVPQTVIDTLGADILRLWVASTDYSGEIAVSQQILQRSADAYRRIRNTTRFLLSNLNGFDAATDLLPPQEMLALDRWAVDRALLLQREIEEAYREYRFWNVYSKVHNFCVQELGGFYLDIIKDRQYTTGANSVARRSCQTALFHIAEALVRWIAPILAFTAEEVWKFLPGERAESVMLATWYDGLSELPADVTLNRQYWEQVMAVKAAVNKELENQRAAKAVGGNLQAEVTLYAEDALQAQLAKLGNELRFVLITSTATLAPLSAAPADAVDSEVAGLKLKVVKSTHAKCGRCWHHREDVGQHAAHPDLCGRCIENIEGSGEVRHYA.

A 'HIGH' region motif is present at residues 58-68 (PYANGSIHIGH). Glutamate 567 serves as a coordination point for L-isoleucyl-5'-AMP. The short motif at 608–612 (KMSKS) is the 'KMSKS' region element. Lysine 611 is a binding site for ATP. Zn(2+) is bound by residues cysteine 906, cysteine 909, cysteine 926, and cysteine 929.

The protein belongs to the class-I aminoacyl-tRNA synthetase family. IleS type 1 subfamily. In terms of assembly, monomer. Requires Zn(2+) as cofactor.

Its subcellular location is the cytoplasm. It carries out the reaction tRNA(Ile) + L-isoleucine + ATP = L-isoleucyl-tRNA(Ile) + AMP + diphosphate. In terms of biological role, catalyzes the attachment of isoleucine to tRNA(Ile). As IleRS can inadvertently accommodate and process structurally similar amino acids such as valine, to avoid such errors it has two additional distinct tRNA(Ile)-dependent editing activities. One activity is designated as 'pretransfer' editing and involves the hydrolysis of activated Val-AMP. The other activity is designated 'posttransfer' editing and involves deacylation of mischarged Val-tRNA(Ile). In Pseudomonas aeruginosa (strain UCBPP-PA14), this protein is Isoleucine--tRNA ligase.